Reading from the N-terminus, the 256-residue chain is Ubiquinone/menaquinone biosynthesis C-methyltransferase UbiE (256 aa).

A compositionally biased stretch (basic and acidic residues) spans 1–12 (MTDPRKGDHAEP). The tract at residues 1–21 (MTDPRKGDHAEPTTHFGYQDV) is disordered. S-adenosyl-L-methionine contacts are provided by residues threonine 79, aspartate 100, and 128 to 129 (DA).

This sequence belongs to the class I-like SAM-binding methyltransferase superfamily. MenG/UbiE family.

The enzyme catalyses a 2-demethylmenaquinol + S-adenosyl-L-methionine = a menaquinol + S-adenosyl-L-homocysteine + H(+). It catalyses the reaction a 2-methoxy-6-(all-trans-polyprenyl)benzene-1,4-diol + S-adenosyl-L-methionine = a 5-methoxy-2-methyl-3-(all-trans-polyprenyl)benzene-1,4-diol + S-adenosyl-L-homocysteine + H(+). It functions in the pathway quinol/quinone metabolism; menaquinone biosynthesis; menaquinol from 1,4-dihydroxy-2-naphthoate: step 2/2. Its pathway is cofactor biosynthesis; ubiquinone biosynthesis. Its function is as follows. Methyltransferase required for the conversion of demethylmenaquinol (DMKH2) to menaquinol (MKH2) and the conversion of 2-polyprenyl-6-methoxy-1,4-benzoquinol (DDMQH2) to 2-polyprenyl-3-methyl-6-methoxy-1,4-benzoquinol (DMQH2). The sequence is that of Ubiquinone/menaquinone biosynthesis C-methyltransferase UbiE from Pseudomonas entomophila (strain L48).